A 371-amino-acid polypeptide reads, in one-letter code: DNA replication and repair protein RecF (371 aa).

ATP is bound at residue 30-37 (GENAQGKT).

It belongs to the RecF family.

It localises to the cytoplasm. The RecF protein is involved in DNA metabolism; it is required for DNA replication and normal SOS inducibility. RecF binds preferentially to single-stranded, linear DNA. It also seems to bind ATP. The protein is DNA replication and repair protein RecF of Staphylococcus epidermidis (strain ATCC 12228 / FDA PCI 1200).